The following is a 310-amino-acid chain: Homoserine O-acetyltransferase (310 aa).

The Acyl-thioester intermediate role is filled by cysteine 142. Residues lysine 163 and serine 192 each coordinate substrate. The active-site Proton acceptor is histidine 235. Glutamate 237 is an active-site residue. Position 249 (arginine 249) interacts with substrate.

This sequence belongs to the MetA family.

The protein localises to the cytoplasm. It carries out the reaction L-homoserine + acetyl-CoA = O-acetyl-L-homoserine + CoA. The protein operates within amino-acid biosynthesis; L-methionine biosynthesis via de novo pathway; O-acetyl-L-homoserine from L-homoserine: step 1/1. Functionally, transfers an acetyl group from acetyl-CoA to L-homoserine, forming acetyl-L-homoserine. This is Homoserine O-acetyltransferase from Parabacteroides distasonis (strain ATCC 8503 / DSM 20701 / CIP 104284 / JCM 5825 / NCTC 11152).